The following is a 172-amino-acid chain: Ribosome maturation factor RimM (172 aa).

A PRC barrel domain is found at 95-168; the sequence is QEGEFYYHQI…CVDVELMEGL (74 aa).

Belongs to the RimM family. As to quaternary structure, binds ribosomal protein uS19.

The protein resides in the cytoplasm. Functionally, an accessory protein needed during the final step in the assembly of 30S ribosomal subunit, possibly for assembly of the head region. Essential for efficient processing of 16S rRNA. May be needed both before and after RbfA during the maturation of 16S rRNA. It has affinity for free ribosomal 30S subunits but not for 70S ribosomes. This is Ribosome maturation factor RimM from Streptococcus pyogenes serotype M49 (strain NZ131).